Consider the following 335-residue polypeptide: Aspartate--ammonia ligase (335 aa).

Belongs to the class-II aminoacyl-tRNA synthetase family. AsnA subfamily.

It localises to the cytoplasm. It catalyses the reaction L-aspartate + NH4(+) + ATP = L-asparagine + AMP + diphosphate + H(+). Its pathway is amino-acid biosynthesis; L-asparagine biosynthesis; L-asparagine from L-aspartate (ammonia route): step 1/1. This Pediococcus pentosaceus (strain ATCC 25745 / CCUG 21536 / LMG 10740 / 183-1w) protein is Aspartate--ammonia ligase.